The chain runs to 792 residues: Genome polyprotein (792 aa).

The interaction with host EXOC1 stretch occupies residues 1–15 (MNNQRKKTGNPSFNM). Over 1-101 (MNNQRKKTGN…LNIMNRRRRS (101 aa)) the chain is Cytoplasmic. The interval 37–72 (LLSGQGPMKLVMAFVAFLRFLAIPPTAGILKRWGSF) is hydrophobic; homodimerization of capsid protein C. The propeptide at 101–114 (SVTMILMLLPTALA) is ER anchor for the capsid protein C, removed in mature form by serine protease NS3. A helical transmembrane segment spans residues 102–119 (VTMILMLLPTALAFHLTT). Topologically, residues 120–242 (RGGEPTLIVS…QIQKVETWAL (123 aa)) are extracellular. Asn-183 carries N-linked (GlcNAc...) asparagine; by host glycosylation. Residues 243 to 260 (RHPGFTVIGLFLAHAIGT) form a helical membrane-spanning segment. Ser-261 is a topological domain (cytoplasmic). A helical membrane pass occupies residues 262–280 (ITQKGIIFILLMLVTPSMA). Residues 281-725 (MRCVGIGNRD…IHQIFGTAYG (445 aa)) lie on the Extracellular side of the membrane. 4 disulfide bridges follow: Cys-283-Cys-310, Cys-340-Cys-401, Cys-354-Cys-385, and Cys-372-Cys-396. N-linked (GlcNAc...) asparagine; by host glycosylation occurs at Asn-347. The interval 378–391 (DRGWGNGCGLFGKG) is fusion peptide. Asn-433 carries an N-linked (GlcNAc...) asparagine; by host glycan. 2 disulfide bridges follow: Cys-465–Cys-565 and Cys-582–Cys-613. Residues 726–746 (VLFSGVSWTMKIGIGILLTWL) traverse the membrane as a helical segment. The Cytoplasmic segment spans residues 747–752 (GLNSRS). Residues 753 to 775 (TSLSMTCIAVGMVTLYLGVMVQA) traverse the membrane as a helical segment. The Extracellular portion of the chain corresponds to 776–792 (DSGCVINWKGKELKCGS). Residues Cys-779 and Cys-790 are joined by a disulfide bond.

As to quaternary structure, homodimer. Interacts (via N-terminus) with host EXOC1 (via C-terminus); this interaction results in EXOC1 degradation through the proteasome degradation pathway. In terms of assembly, forms heterodimers with envelope protein E in the endoplasmic reticulum and Golgi. Homodimer; in the endoplasmic reticulum and Golgi. Interacts with protein prM. Interacts with non-structural protein 1. As to quaternary structure, homodimer; Homohexamer when secreted. Interacts with envelope protein E. In terms of processing, specific enzymatic cleavages in vivo yield mature proteins. Cleavages in the lumen of endoplasmic reticulum are performed by host signal peptidase, wereas cleavages in the cytoplasmic side are performed by serine protease NS3. Signal cleavage at the 2K-4B site requires a prior NS3 protease-mediated cleavage at the 4A-2K site. N-glycosylated. Post-translationally, N-glycosylated. The excreted form is glycosylated and this is required for efficient secretion of the protein from infected cells.

It is found in the virion. It localises to the host nucleus. Its subcellular location is the host cytoplasm. The protein resides in the host perinuclear region. The protein localises to the secreted. It is found in the virion membrane. It localises to the host endoplasmic reticulum membrane. Functionally, plays a role in virus budding by binding to the cell membrane and gathering the viral RNA into a nucleocapsid that forms the core of a mature virus particle. During virus entry, may induce genome penetration into the host cytoplasm after hemifusion induced by the surface proteins. Can migrate to the cell nucleus where it modulates host functions. Overcomes the anti-viral effects of host EXOC1 by sequestering and degrading the latter through the proteasome degradation pathway. Its function is as follows. Inhibits RNA silencing by interfering with host Dicer. Prevents premature fusion activity of envelope proteins in trans-Golgi by binding to envelope protein E at pH6.0. After virion release in extracellular space, gets dissociated from E dimers. In terms of biological role, acts as a chaperone for envelope protein E during intracellular virion assembly by masking and inactivating envelope protein E fusion peptide. prM is the only viral peptide matured by host furin in the trans-Golgi network probably to avoid catastrophic activation of the viral fusion activity in acidic Golgi compartment prior to virion release. prM-E cleavage is inefficient, and many virions are only partially matured. These uncleaved prM would play a role in immune evasion. Functionally, may play a role in virus budding. Exerts cytotoxic effects by activating a mitochondrial apoptotic pathway through M ectodomain. May display a viroporin activity. Its function is as follows. Binds to host cell surface receptor and mediates fusion between viral and cellular membranes. Envelope protein is synthesized in the endoplasmic reticulum in the form of heterodimer with protein prM. They play a role in virion budding in the ER, and the newly formed immature particle is covered with 60 spikes composed of heterodimer between precursor prM and envelope protein E. The virion is transported to the Golgi apparatus where the low pH causes dissociation of PrM-E heterodimers and formation of E homodimers. prM-E cleavage is inefficient, and many virions are only partially matured. These uncleaved prM would play a role in immune evasion. Involved in immune evasion, pathogenesis and viral replication. Once cleaved off the polyprotein, is targeted to three destinations: the viral replication cycle, the plasma membrane and the extracellular compartment. Essential for viral replication. Required for formation of the replication complex and recruitment of other non-structural proteins to the ER-derived membrane structures. Excreted as a hexameric lipoparticle that plays a role against host immune response. Antagonizing the complement function. Binds to the host macrophages and dendritic cells. Inhibits signal transduction originating from Toll-like receptor 3 (TLR3). In terms of biological role, disrupts the host endothelial glycocalyx layer of host pulmonary microvascular endothelial cells, inducing degradation of sialic acid and shedding of heparan sulfate proteoglycans. NS1 induces expression of sialidases, heparanase, and activates cathepsin L, which activates heparanase via enzymatic cleavage. These effects are probably linked to the endothelial hyperpermeability observed in severe dengue disease. In Aedes aegypti (Yellowfever mosquito), this protein is Genome polyprotein.